Here is a 702-residue protein sequence, read N- to C-terminus: Glucosidase 2 subunit beta (702 aa).

The N-terminal stretch at 1-20 (MVSMFSLFLLLIEQSPLVAS) is a signal peptide. The N-linked (GlcNAc...) asparagine glycan is linked to N145. A coiled-coil region spans residues 163–228 (SYREGKEALE…LRGEYFNQLS (66 aa)). 2 N-linked (GlcNAc...) asparagine glycosylation sites follow: N240 and N358. The disordered stretch occupies residues 435 to 457 (PKVLPPDAVESEQDTNSDHIGTS). The stretch at 478–517 (KDLVSLEKRFRSCESQVSLLENELKQKMDYKKLLDETEDE) forms a coiled coil. N-linked (GlcNAc...) asparagine glycans are attached at residues N520 and N525. The region spanning 537-689 (SYCLDDILDN…DVVGPLGCNK (153 aa)) is the MRH domain. 3 cysteine pairs are disulfide-bonded: C539/C552, C646/C675, and C660/C687. 2 N-linked (GlcNAc...) asparagine glycosylation sites follow: N688 and N699.

In terms of assembly, heterodimer of a catalytic subunit alpha (ROT2) and a subunit beta (GTB1).

It localises to the endoplasmic reticulum. In terms of biological role, subunit of glucosidase 2, which cleaves sequentially the 2 innermost alpha-1,3-linked glucose residues from the Glc(2)Man(9)GlcNAc(2) oligosaccharide precursor of immature glycoproteins. Specifically required for the cleavage of the final glucose. The chain is Glucosidase 2 subunit beta (GTB1) from Saccharomyces cerevisiae (strain ATCC 204508 / S288c) (Baker's yeast).